The chain runs to 275 residues: 4-diphosphocytidyl-2-C-methyl-D-erythritol kinase (275 aa).

Residue Lys-14 is part of the active site. ATP is bound at residue Pro-98–Ser-108. The active site involves Asp-140.

It belongs to the GHMP kinase family. IspE subfamily.

The enzyme catalyses 4-CDP-2-C-methyl-D-erythritol + ATP = 4-CDP-2-C-methyl-D-erythritol 2-phosphate + ADP + H(+). It participates in isoprenoid biosynthesis; isopentenyl diphosphate biosynthesis via DXP pathway; isopentenyl diphosphate from 1-deoxy-D-xylulose 5-phosphate: step 3/6. In terms of biological role, catalyzes the phosphorylation of the position 2 hydroxy group of 4-diphosphocytidyl-2C-methyl-D-erythritol. In Francisella tularensis subsp. holarctica (strain FTNF002-00 / FTA), this protein is 4-diphosphocytidyl-2-C-methyl-D-erythritol kinase.